We begin with the raw amino-acid sequence, 321 residues long: Hex-5-enoyl-[acyl-carrier protein] acetylenase (321 aa).

2 consecutive transmembrane segments (helical) span residues 36-56 and 62-82; these read FLLY…LLWW and VEIG…SVGL. A Histidine box-1 motif is present at residues 83–88; the sequence is HRYFAH. A helical membrane pass occupies residues 99–119; the sequence is VILAILGCMGAQGPVVSWVAV. Positions 120–124 match the Histidine box-2 motif; sequence HRRHH. A helical transmembrane segment spans residues 188–208; the sequence is YVVWIVLGLLIPTILGGIIHG. A Histidine box-3 motif is present at residues 269-273; the sequence is QNNHH.

The protein belongs to the fatty acid desaturase type 2 family. Fe(2+) serves as cofactor.

The protein resides in the membrane. It catalyses the reaction 5-hexenoyl-[ACP] + 2 reduced [2Fe-2S]-[ferredoxin] + O2 + 2 H(+) = 5-hexynoyl-[ACP] + 2 oxidized [2Fe-2S]-[ferredoxin] + 2 H2O. The catalysed reaction is hexanoyl-[ACP] + 2 reduced [2Fe-2S]-[ferredoxin] + O2 + 2 H(+) = 5-hexenoyl-[ACP] + 2 oxidized [2Fe-2S]-[ferredoxin] + 2 H2O. Functionally, desaturase involved in the biosynthesis of jamaicamides, which show sodium channel blocking activity and fish toxicity. Catalyzes the conversion of 5-hexenoyl loaded onto the acyl carrier protein JamC (5-hexenoyl-JamC) to 5-hexynoyl-JamC. Can also catalyze the conversion of hexanoyl-JamC to 5-hexenoyl-JamC, but it cannot use free 5-hexenoic acid, 5-hexenoyl-CoA, 2-hexenoyl-JamC, 3-hexenoyl-JamC or 4-hexenoyl-JamC. Is specific for C(6) chains, and cannot use 4-pentenoyl-JamC, 6-heptenoyl-JamC or 7-octenoyl-JamC as substrate. The polypeptide is Hex-5-enoyl-[acyl-carrier protein] acetylenase (Moorena producens (strain JHB)).